The chain runs to 148 residues: Large ribosomal subunit protein bL9 (148 aa).

Belongs to the bacterial ribosomal protein bL9 family.

Binds to the 23S rRNA. This Bifidobacterium adolescentis (strain ATCC 15703 / DSM 20083 / NCTC 11814 / E194a) protein is Large ribosomal subunit protein bL9.